Here is a 273-residue protein sequence, read N- to C-terminus: Replication factor A protein 2 (273 aa).

Polar residues predominate over residues 1–13; sequence MATYQPYNEYSSV. Positions 1–38 are disordered; sequence MATYQPYNEYSSVTGGGFENSESRPGSGESETNTRVNT. Phosphoserine is present on Ser-27. A compositionally biased stretch (polar residues) spans 29-38; it reads ESETNTRVNT. Positions 69–157 form a DNA-binding region, OB; the sequence is VCFVGVVRNI…NIQYAVIKPI (89 aa). A Phosphoserine modification is found at Ser-122.

Belongs to the replication factor A protein 2 family. Heterotrimer of 69, 36, and 13 kDa chains. The DNA-binding activity may reside exclusively on the 69 kDa subunit. Interacts with MCM10. Phosphorylated in a cell cycle-dependent manner with phosphorylation increasing at the entry in S phase and dephosphorylation occurring at mitosis. Post-translationally, the N-terminus is blocked.

Its subcellular location is the nucleus. In terms of biological role, binds to single-stranded sequences participating in DNA replication in addition to those mediating transcriptional repression (URS1) and activation (CAR1). Stimulates the activity of a cognate strand exchange protein (SEP1). It cooperates with T-AG and DNA topoisomerase I to unwind template DNA containing the simian virus 40 origin of DNA replication. The polypeptide is Replication factor A protein 2 (RFA2) (Saccharomyces cerevisiae (strain ATCC 204508 / S288c) (Baker's yeast)).